A 90-amino-acid chain; its full sequence is DNA-directed RNA polymerase subunit omega (90 aa).

The segment at 69 to 90 is disordered; it reads RQEQQEQEAAELAAVSSIARNR.

The protein belongs to the RNA polymerase subunit omega family. In terms of assembly, the RNAP catalytic core consists of 2 alpha, 1 beta, 1 beta' and 1 omega subunit. When a sigma factor is associated with the core the holoenzyme is formed, which can initiate transcription.

The catalysed reaction is RNA(n) + a ribonucleoside 5'-triphosphate = RNA(n+1) + diphosphate. Promotes RNA polymerase assembly. Latches the N- and C-terminal regions of the beta' subunit thereby facilitating its interaction with the beta and alpha subunits. The polypeptide is DNA-directed RNA polymerase subunit omega (Vibrio vulnificus (strain CMCP6)).